The sequence spans 445 residues: Vacuolar fusion protein CCZ1 homolog (445 aa).

The protein belongs to the CCZ1 family.

This is Vacuolar fusion protein CCZ1 homolog from Dictyostelium discoideum (Social amoeba).